A 220-amino-acid chain; its full sequence is Vesicle-associated membrane protein 7 (220 aa).

Ala2 bears the N-acetylalanine mark. Topologically, residues 2-188 (AILFAVVARG…ARAMCMKNLK (187 aa)) are cytoplasmic. A Longin domain is found at 7-110 (VVARGTTILA…AMNSEFSSVL (104 aa)). The region spanning 125-185 (KVMETQAQVD…RNLARAMCMK (61 aa)) is the v-SNARE coiled-coil homology domain. Residues Ser167 and Ser168 each carry the phosphoserine modification. A helical; Anchor for type IV membrane protein transmembrane segment spans residues 189–209 (LTIIIIIISVVFIYIIVSPLC). At 210–220 (GGFTWPNCVKK) the chain is on the vesicular side.

It belongs to the synaptobrevin family. In terms of assembly, component of the SNARE complex composed of STX4, SNAP23 and VAMP7 that binds SYT7 during lysosomal exocytosis. Component of the SNARE complex composed of STX7, STX8, VAMP7 and VTI1B that is required for heterotypic fusion of late endosomes with lysosomes. May interact with STX17. Interacts with PICALM. Interacts with RAB21.

It localises to the cytoplasmic vesicle. It is found in the secretory vesicle membrane. Its subcellular location is the golgi apparatus. The protein resides in the trans-Golgi network membrane. The protein localises to the late endosome membrane. It localises to the lysosome membrane. It is found in the endoplasmic reticulum membrane. Its subcellular location is the phagosome membrane. The protein resides in the synapse. The protein localises to the synaptosome. In terms of biological role, involved in the targeting and/or fusion of transport vesicles to their target membrane during transport of proteins from the early endosome to the lysosome. Required for heterotypic fusion of late endosomes with lysosomes and homotypic lysosomal fusion. Required for calcium regulated lysosomal exocytosis. Involved in the export of chylomicrons from the endoplasmic reticulum to the cis Golgi. Required for exocytosis of mediators during eosinophil and neutrophil degranulation, and target cell killing by natural killer cells. Required for focal exocytosis of late endocytic vesicles during phagosome formation. This Bos taurus (Bovine) protein is Vesicle-associated membrane protein 7 (VAMP7).